A 20-amino-acid polypeptide reads, in one-letter code: Dermaseptin-N1 (20 aa).

L20 bears the Leucine amide mark.

Expressed by the skin glands.

It localises to the secreted. In terms of biological role, antimicrobial peptide with moderate activity against both Gram-positive and Gram-negative bacteria, and important activity against Leishmania species (L.amazonensis and L.infantum). Acts on both Leishmania promastigote and amastigote forms. Shows activity against E.coli (MIC=17.8 uM), S.aureus (MIC=32.3 uM) and the phytopathogenic bacterium Xanthomonas axonopodis (MIC=2 uM). Shows low cytotoxicity against mammalian cells in models of peritoneal macrophages. This Pithecopus nordestinus (Northeastern Brazilian leaf frog) protein is Dermaseptin-N1.